The chain runs to 205 residues: Proteasome subunit beta type-3 (205 aa).

N-acetylserine is present on serine 2. Residue lysine 77 is modified to N6-acetyllysine.

It belongs to the peptidase T1B family. As to quaternary structure, the 26S proteasome consists of a 20S proteasome core and two 19S regulatory subunits. The 20S proteasome core is a barrel-shaped complex made of 28 subunits that are arranged in four stacked rings. The two outer rings are each formed by seven alpha subunits, and the two inner rings are formed by seven beta subunits. The proteolytic activity is exerted by three beta-subunits PSMB5, PSMB6 and PSMB7.

It is found in the cytoplasm. Its subcellular location is the nucleus. Functionally, non-catalytic component of the 20S core proteasome complex involved in the proteolytic degradation of most intracellular proteins. This complex plays numerous essential roles within the cell by associating with different regulatory particles. Associated with two 19S regulatory particles, forms the 26S proteasome and thus participates in the ATP-dependent degradation of ubiquitinated proteins. The 26S proteasome plays a key role in the maintenance of protein homeostasis by removing misfolded or damaged proteins that could impair cellular functions, and by removing proteins whose functions are no longer required. Associated with the PA200 or PA28, the 20S proteasome mediates ubiquitin-independent protein degradation. This type of proteolysis is required in several pathways including spermatogenesis (20S-PA200 complex) or generation of a subset of MHC class I-presented antigenic peptides (20S-PA28 complex). The polypeptide is Proteasome subunit beta type-3 (PSMB3) (Bos taurus (Bovine)).